The primary structure comprises 324 residues: MYG1 protein C694.04c (324 aa).

Belongs to the MYG1 family.

This Schizosaccharomyces pombe (strain 972 / ATCC 24843) (Fission yeast) protein is MYG1 protein C694.04c.